Reading from the N-terminus, the 129-residue chain is Large ribosomal subunit protein eL32 (129 aa).

This sequence belongs to the eukaryotic ribosomal protein eL32 family.

The polypeptide is Large ribosomal subunit protein eL32 (rpl32e) (Methanosarcina acetivorans (strain ATCC 35395 / DSM 2834 / JCM 12185 / C2A)).